The primary structure comprises 45 residues: uncharacterized protein (45 aa).

Residues 1-26 show a composition bias toward basic and acidic residues; that stretch reads MIMGKDRQEKKLKASGRVESDRDQSI. The interval 1–45 is disordered; that stretch reads MIMGKDRQEKKLKASGRVESDRDQSIHYDGATSLEQNGRFKKRKS.

This is an uncharacterized protein from Bacillus subtilis (strain 168).